The chain runs to 41 residues: Pi-stichotoxin-Hcr5a (41 aa).

Intrachain disulfides connect Cys-4–Cys-37, Cys-6–Cys-30, and Cys-20–Cys-38.

Belongs to the sea anemone type 3 (BDS) potassium channel toxin family.

It localises to the secreted. Its subcellular location is the nematocyst. In terms of biological role, weakly inhibits human homomeric ASIC3 (IC(50)=5.5 uM). This chain is Pi-stichotoxin-Hcr5a, found in Radianthus crispa (Leathery sea anemone).